The sequence spans 630 residues: ATP-dependent zinc metalloprotease FtsH (630 aa).

Over 1–7 (MNNFMKN) the chain is Cytoplasmic. The chain crosses the membrane as a helical span at residues 8–28 (IGFYLVLIALSILVAQFFVDT). The Periplasmic portion of the chain corresponds to 29-111 (DVNTIVDTDV…KTEPEPTAPW (83 aa)). Residues 112-132 (WTGMLAYILPIILLIGAWFFI) traverse the membrane as a helical segment. The Cytoplasmic portion of the chain corresponds to 133–630 (MQRMQGGGSQ…ENREHENNDK (498 aa)). 203 to 210 (GPPGTGKT) is a binding site for ATP. His-425 serves as a coordination point for Zn(2+). Glu-426 is an active-site residue. Zn(2+) contacts are provided by His-429 and Asp-501. The interval 601–630 (KLIKGEPLDDDSIDNSTDENENREHENNDK) is disordered. Residues 608-619 (LDDDSIDNSTDE) are compositionally biased toward acidic residues. The span at 620–630 (NENREHENNDK) shows a compositional bias: basic and acidic residues.

It in the central section; belongs to the AAA ATPase family. In the C-terminal section; belongs to the peptidase M41 family. Homohexamer. The cofactor is Zn(2+).

Its subcellular location is the cell inner membrane. Functionally, acts as a processive, ATP-dependent zinc metallopeptidase for both cytoplasmic and membrane proteins. Plays a role in the quality control of integral membrane proteins. In Halothermothrix orenii (strain H 168 / OCM 544 / DSM 9562), this protein is ATP-dependent zinc metalloprotease FtsH.